Consider the following 541-residue polypeptide: Putative acyl-CoA dehydrogenase AidB (541 aa).

Residues Met182 to Ser191, Thr185, Ser191, Phe216 to Ser218, Ser218, Ile423 to Leu433, and Asn429 each bind FAD. Residues Val445 to Val541 are dsDNA-binding.

This sequence belongs to the acyl-CoA dehydrogenase family. In terms of assembly, homotetramer. Dimer of dimers. FAD serves as cofactor.

Its subcellular location is the cytoplasm. Part of the adaptive DNA-repair response to alkylating agents. Could prevent alkylation damage by protecting DNA and destroying alkylating agents that have yet to reach their DNA target. Binds to double-stranded DNA with a preference for a DNA region that includes its own promoter. Shows weak isovaleryl-CoA dehydrogenase activity in vitro. The protein is Putative acyl-CoA dehydrogenase AidB (aidB) of Escherichia coli (strain K12).